The sequence spans 592 residues: BTB/POZ domain-containing protein At5g03250 (592 aa).

In terms of domain architecture, BTB spans 28–98 (SDVTIEVGDM…CYGVKIELTA (71 aa)). Positions 217–502 (DWWFDDASFL…VQVLFFEQLR (286 aa)) constitute an NPH3 domain. Phosphotyrosine is present on Y443.

Belongs to the NPH3 family.

The protein operates within protein modification; protein ubiquitination. May act as a substrate-specific adapter of an E3 ubiquitin-protein ligase complex (CUL3-RBX1-BTB) which mediates the ubiquitination and subsequent proteasomal degradation of target proteins. This is BTB/POZ domain-containing protein At5g03250 from Arabidopsis thaliana (Mouse-ear cress).